The primary structure comprises 289 residues: Aquaporin-2 (289 aa).

The tract at residues methionine 1–arginine 36 is disordered. Residues methionine 1–histidine 47 are Cytoplasmic-facing. A helical transmembrane segment spans residues phenylalanine 48 to isoleucine 68. At cysteine 69 to leucine 90 the chain is on the extracellular side. Residues isoleucine 91–valine 111 form a helical membrane-spanning segment. Over serine 112 to cysteine 135 the chain is Cytoplasmic. The short motif at asparagine 117 to alanine 119 is the NPA 1 element. The helical transmembrane segment at valine 136 to methionine 156 threads the bilayer. Topologically, residues threonine 157–arginine 175 are extracellular. Residues glycine 176–valine 196 traverse the membrane as a helical segment. Residues glutamate 197 to asparagine 202 lie on the Cytoplasmic side of the membrane. Residues phenylalanine 203–tyrosine 223 traverse the membrane as a helical segment. At threonine 224 to histidine 247 the chain is on the extracellular side. The short motif at asparagine 229–alanine 231 is the NPA 2 element. Residues tryptophan 248–leucine 268 traverse the membrane as a helical segment. Residues glutamine 269–aspartate 289 are Cytoplasmic-facing.

The protein belongs to the MIP/aquaporin (TC 1.A.8) family.

It localises to the endoplasmic reticulum membrane. The protein resides in the cell membrane. Functionally, water channel required to facilitate the transport of water across membranes. Involved in freeze tolerance, osmotolerance and cell flocculation in liquid cultures. Is non-functional in most laboratory strains. The protein is Aquaporin-2 (AQY2) of Saccharomyces cerevisiae (Baker's yeast).